The sequence spans 421 residues: D-amino acid dehydrogenase (421 aa).

3–17 lines the FAD pocket; it reads VLVLGGGVVGVTSAY.

Belongs to the DadA oxidoreductase family. The cofactor is FAD.

It carries out the reaction a D-alpha-amino acid + A + H2O = a 2-oxocarboxylate + AH2 + NH4(+). It participates in amino-acid degradation; D-alanine degradation; NH(3) and pyruvate from D-alanine: step 1/1. Functionally, oxidative deamination of D-amino acids. The sequence is that of D-amino acid dehydrogenase from Methylobacterium sp. (strain 4-46).